The following is a 711-amino-acid chain: RB-associated KRAB zinc finger protein (711 aa).

The 72-residue stretch at 8 to 79 (LSFKDVAVAF…EGDRHAQRHL (72 aa)) folds into the KRAB domain. Glycyl lysine isopeptide (Lys-Gly) (interchain with G-Cter in SUMO2) cross-links involve residues lysine 97 and lysine 256. Positions 170–257 (AYGESLEDFN…YPRSQMELKP (88 aa)) are required for interaction with RB1. C2H2-type zinc fingers lie at residues 258–280 (FECTQCGKSFCKKSKFIIHQRAH) and 286–308 (YACSVCGKSFSQKGTLTVHRRSH). Residue lysine 312 forms a Glycyl lysine isopeptide (Lys-Gly) (interchain with G-Cter in SUMO2) linkage. C2H2-type zinc fingers lie at residues 314–336 (YKCNECGKTFCQKLHLTQHQRTH), 342–364 (YECSECGKSFCQKTHLTLHQRNH), 370–392 (YPCNECGKSFSRKSALNDHQRTH), 398–420 (YKCNECGKSYYRKSTLITHQRTH), 426–448 (YQCSECGKFFSRVSYLTIHYRSH), and 454–476 (YECTECGKTFNLNSAFIRHWKVH). Residue lysine 354 forms a Glycyl lysine isopeptide (Lys-Gly) (interchain with G-Cter in SUMO2) linkage. The segment at 414-711 (ITHQRTHTGE…TVNVLTVEKL (298 aa)) is interaction with AR. A C2H2-type 9; degenerate zinc finger spans residues 508 to 530 (YECNECGKTFLDSSAFHRHQSVP). Lysine 534 participates in a covalent cross-link: Glycyl lysine isopeptide (Lys-Gly) (interchain with G-Cter in SUMO2). 6 C2H2-type zinc fingers span residues 536 to 558 (YECNICGKSFSDSSCYTVHYRGH), 564 to 586 (FGCSECGKTFSHNSSLFRHQRVH), 592 to 614 (YECYECGKFFSQKSYLTIHHRIH), 620 to 642 (YECSKCGKVFSRMSNLTVHYRSH), 648 to 670 (YECNECGKVFSQKSYLTVHYRTH), and 676 to 698 (YECNECGKKFHHRSAFNSHQRIH).

Belongs to the krueppel C2H2-type zinc-finger protein family. As to quaternary structure, interacts with AR. May also interact with other nuclear hormone receptors such as NR3C1/GR. Interacts with RB1.

It localises to the nucleus. In terms of biological role, may repress E2F-dependent transcription. May promote AR-dependent transcription. The sequence is that of RB-associated KRAB zinc finger protein (Rbak) from Mus musculus (Mouse).